A 3083-amino-acid polypeptide reads, in one-letter code: Genome polyprotein (3083 aa).

Residues 173–313 (IVCVDDVNNL…VLFYSDVEHY (141 aa)) enclose the Peptidase S30 domain. S267 functions as the For P1 proteinase activity in the catalytic mechanism. Residues 365-368 (KLSC) carry the Involved in interaction with stylet and aphid transmission motif. Residues 621-623 (PTK) carry the Involved in virions binding and aphid transmission motif. The region spanning 647 to 769 (MYIAKEGYCY…QSEMKHYRVG (123 aa)) is the Peptidase C6 domain. Residues C655 and H728 each act as for helper component proteinase activity in the active site. A Helicase ATP-binding domain is found at 1239-1391 (EIASSSEGEF…TQFAVKVKTE (153 aa)). Residue 1252-1259 (GAVGSGKS) coordinates ATP. Positions 1341–1344 (DECH) match the DECH box motif. Residues 1410–1569 (DMVQHGNNIL…GLSVTTHGVS (160 aa)) form the Helicase C-terminal domain. Positions 1894 to 1903 (KRGKVKGNNS) match the Nuclear localization signal motif. Y1918 carries the post-translational modification O-(5'-phospho-RNA)-tyrosine. In terms of domain architecture, Peptidase C4 spans 2045–2263 (SKSIYKGVRD…IAWGSLNLVD (219 aa)). Residues H2090, D2125, and C2195 each act as for nuclear inclusion protein A activity in the active site. Positions 2529 to 2653 (WLYCHADGSQ…AVKDEDSGLL (125 aa)) constitute a RdRp catalytic domain. The disordered stretch occupies residues 2808-2855 (QTREAGAGASKKDKDEDKDKKKDVASSSASEKAVATATKDKDVNAGSH). Residues 2817-2831 (SKKDKDEDKDKKKDV) show a composition bias toward basic and acidic residues. Residues 2832-2844 (ASSSASEKAVATA) are compositionally biased toward low complexity. A Phosphothreonine modification is found at T3065.

It belongs to the potyviridae genome polyprotein family. In terms of assembly, interacts with host eIF4E protein (via cap-binding region); this interaction mediates the translation of the VPg-viral RNA conjugates. Part of a complex that comprises VPg, RNA, host EIF4E and EIF4G; this interaction mediates the translation of the VPg-viral RNA conjugates. VPg is uridylylated by the polymerase and is covalently attached to the 5'-end of the genomic RNA. This uridylylated form acts as a nucleotide-peptide primer for the polymerase. In terms of processing, potyviral RNA is expressed as two polyproteins which undergo post-translational proteolytic processing. Genome polyprotein is processed by NIa-pro, P1 and HC-pro proteinases resulting in the production of at least ten individual proteins. P3N-PIPO polyprotein is cleaved by P1 and HC-pro proteinases resulting in the production of three individual proteins. The P1 proteinase and the HC-pro cleave only their respective C-termini autocatalytically. 6K1 is essential for proper proteolytic separation of P3 from CI.

It is found in the host cytoplasmic vesicle. The protein localises to the host nucleus. It localises to the virion. The catalysed reaction is RNA(n) + a ribonucleoside 5'-triphosphate = RNA(n+1) + diphosphate. It carries out the reaction Hydrolyzes glutaminyl bonds, and activity is further restricted by preferences for the amino acids in P6 - P1' that vary with the species of potyvirus, e.g. Glu-Xaa-Xaa-Tyr-Xaa-Gln-|-(Ser or Gly) for the enzyme from tobacco etch virus. The natural substrate is the viral polyprotein, but other proteins and oligopeptides containing the appropriate consensus sequence are also cleaved.. The enzyme catalyses Hydrolyzes a Gly-|-Gly bond at its own C-terminus, commonly in the sequence -Tyr-Xaa-Val-Gly-|-Gly, in the processing of the potyviral polyprotein.. In terms of biological role, required for aphid transmission and also has proteolytic activity. Only cleaves a Gly-Gly dipeptide at its own C-terminus. Interacts with virions and aphid stylets. Acts as a suppressor of RNA-mediated gene silencing, also known as post-transcriptional gene silencing (PTGS), a mechanism of plant viral defense that limits the accumulation of viral RNAs. May have RNA-binding activity. Has helicase activity. It may be involved in replication. Its function is as follows. Indispensable for virus replication. Reduces the abundance of host transcripts related to jasmonic acid biosynthesis therefore altering the host defenses. In order to increase its own stability, decreases host protein degradation pathways. Functionally, indispensable for virus replication. In terms of biological role, mediates the cap-independent, EIF4E-dependent translation of viral genomic RNAs. Binds to the cap-binding site of host EIF4E and thus interferes with the host EIF4E-dependent mRNA export and translation. VPg-RNA directly binds EIF4E and is a template for transcription. Also forms trimeric complexes with EIF4E-EIF4G, which are templates for translation. Has RNA-binding and proteolytic activities. Its function is as follows. An RNA-dependent RNA polymerase that plays an essential role in the virus replication. Functionally, involved in aphid transmission, cell-to-cell and systemis movement, encapsidation of the viral RNA and in the regulation of viral RNA amplification. The protein is Genome polyprotein of Zucchini yellow mosaic virus (strain Singapore) (ZYMV).